A 74-amino-acid chain; its full sequence is Cytochrome b559 subunit alpha (74 aa).

A helical transmembrane segment spans residues 22-36; sequence VIHTVTIPSLFVAGW. H24 is a binding site for heme.

The protein belongs to the PsbE/PsbF family. In terms of assembly, heterodimer of an alpha subunit and a beta subunit. PSII is composed of 1 copy each of membrane proteins PsbA, PsbB, PsbC, PsbD, PsbE, PsbF, PsbH, PsbI, PsbJ, PsbK, PsbL, PsbM, PsbT, PsbX, PsbY, PsbZ, Psb30/Ycf12, at least 3 peripheral proteins of the oxygen-evolving complex and a large number of cofactors. It forms dimeric complexes. It depends on heme b as a cofactor.

The protein resides in the plastid. It localises to the cyanelle thylakoid membrane. This b-type cytochrome is tightly associated with the reaction center of photosystem II (PSII). PSII is a light-driven water:plastoquinone oxidoreductase that uses light energy to abstract electrons from H(2)O, generating O(2) and a proton gradient subsequently used for ATP formation. It consists of a core antenna complex that captures photons, and an electron transfer chain that converts photonic excitation into a charge separation. This chain is Cytochrome b559 subunit alpha, found in Cyanophora paradoxa.